A 584-amino-acid chain; its full sequence is Protein DENND6A (584 aa).

The disordered stretch occupies residues 1–23; it reads MALWERGAGGAAEAGEDATEEPE. The uDENN domain occupies 39 to 218; the sequence is HCVCVVGFDL…KLRIPTYRDK (180 aa). The 126-residue stretch at 244 to 369 folds into the cDENN domain; that stretch reads EVDLFRCFCP…VKVKKLKNLK (126 aa). The dDENN domain occupies 371–504; sequence LDSKPGVYTS…RSRQKEMTQN (134 aa).

This sequence belongs to the DENND6 family.

It is found in the recycling endosome. Its subcellular location is the cytoplasm. Its function is as follows. Guanine nucleotide exchange factor (GEF) for RAB14. This Gallus gallus (Chicken) protein is Protein DENND6A (DENND6A).